A 293-amino-acid chain; its full sequence is Ribosomal protein L11 methyltransferase (293 aa).

S-adenosyl-L-methionine contacts are provided by T144, G165, D187, and N228.

Belongs to the methyltransferase superfamily. PrmA family.

It is found in the cytoplasm. The catalysed reaction is L-lysyl-[protein] + 3 S-adenosyl-L-methionine = N(6),N(6),N(6)-trimethyl-L-lysyl-[protein] + 3 S-adenosyl-L-homocysteine + 3 H(+). In terms of biological role, methylates ribosomal protein L11. This Methylococcus capsulatus (strain ATCC 33009 / NCIMB 11132 / Bath) protein is Ribosomal protein L11 methyltransferase.